A 123-amino-acid polypeptide reads, in one-letter code: Holo-[acyl-carrier-protein] synthase (123 aa).

2 residues coordinate Mg(2+): Asp9 and Glu57.

It belongs to the P-Pant transferase superfamily. AcpS family. The cofactor is Mg(2+).

Its subcellular location is the cytoplasm. The enzyme catalyses apo-[ACP] + CoA = holo-[ACP] + adenosine 3',5'-bisphosphate + H(+). Transfers the 4'-phosphopantetheine moiety from coenzyme A to a Ser of acyl-carrier-protein. This chain is Holo-[acyl-carrier-protein] synthase, found in Streptomyces avermitilis (strain ATCC 31267 / DSM 46492 / JCM 5070 / NBRC 14893 / NCIMB 12804 / NRRL 8165 / MA-4680).